A 743-amino-acid chain; its full sequence is Cytosolic endo-beta-N-acetylglucosaminidase (743 aa).

Residue M1 is modified to N-acetylmethionine. Residues 1-11 show a composition bias toward low complexity; sequence MEAAAVTVTRS. Positions 1 to 55 are disordered; it reads MEAAAVTVTRSATRRRRRQLQGLAAPEAGTQEEQEDQEPRPRRRRPGRSIKDEEE. S66 is subject to Phosphoserine. One can recognise a BRCT domain in the interval 291–383; sequence RVFFDSCDGF…DFFQNQDKFW (93 aa).

This sequence belongs to the glycosyl hydrolase 85 family. In terms of tissue distribution, widely expressed. Expressed at higher level in thymus and spleen.

The protein localises to the cytoplasm. It is found in the cytosol. The catalysed reaction is an N(4)-(oligosaccharide-(1-&gt;3)-[oligosaccharide-(1-&gt;6)]-beta-D-Man-(1-&gt;4)-beta-D-GlcNAc-(1-&gt;4)-alpha-D-GlcNAc)-L-asparaginyl-[protein] + H2O = an oligosaccharide-(1-&gt;3)-[oligosaccharide-(1-&gt;6)]-beta-D-Man-(1-&gt;4)-D-GlcNAc + N(4)-(N-acetyl-beta-D-glucosaminyl)-L-asparaginyl-[protein]. Endoglycosidase that releases N-glycans from glycoproteins by cleaving the beta-1,4-glycosidic bond in the N,N'-diacetylchitobiose core. Involved in the processing of free oligosaccharides in the cytosol. The sequence is that of Cytosolic endo-beta-N-acetylglucosaminidase (ENGASE) from Homo sapiens (Human).